The primary structure comprises 360 residues: Transmembrane protein 198 (360 aa).

A run of 7 helical transmembrane segments spans residues 36-56 (ALPA…CFFG), 59-79 (CFKA…IFLL), 93-113 (GASA…AMLV), 116-136 (VGLF…ALLG), 145-165 (SVWG…LLTL), 177-197 (AVTG…LLLL), and 218-238 (WALL…QWRV). 2 disordered regions span residues 260 to 304 (MRIR…RPVP) and 324 to 360 (RQTG…PVRV). The segment covering 286–296 (RAPPRPGPPDP) has biased composition (pro residues). The span at 326-335 (TGSSLSSFMA) shows a compositional bias: polar residues.

This sequence belongs to the TMEM198 family. In terms of assembly, interacts with LRP6.

The protein resides in the membrane. It is found in the cell membrane. It localises to the cytoplasmic vesicle. Its function is as follows. Promotes LRP6 phosphorylation by casein kinases and thereby plays a role in Wnt signaling. May be a membrane scaffold protein involved in the self-aggregation of LRP6 to further enhance its activity. The protein is Transmembrane protein 198 (TMEM198) of Homo sapiens (Human).